The following is a 335-amino-acid chain: Dihydroorotate dehydrogenase (quinone) (335 aa).

FMN contacts are provided by residues 59 to 63 (AGLDK) and Thr83. Residue Lys63 coordinates substrate. Residue 108 to 112 (NRMGF) coordinates substrate. The FMN site is built by Asn136 and Asn169. Asn169 serves as a coordination point for substrate. The Nucleophile role is filled by Ser172. Asn174 provides a ligand contact to substrate. FMN is bound by residues Lys214 and Thr242. Residue 243 to 244 (NT) participates in substrate binding. FMN contacts are provided by residues Gly265, Gly294, and 315-316 (YS).

The protein belongs to the dihydroorotate dehydrogenase family. Type 2 subfamily. In terms of assembly, monomer. The cofactor is FMN.

The protein resides in the cell membrane. It catalyses the reaction (S)-dihydroorotate + a quinone = orotate + a quinol. Its pathway is pyrimidine metabolism; UMP biosynthesis via de novo pathway; orotate from (S)-dihydroorotate (quinone route): step 1/1. In terms of biological role, catalyzes the conversion of dihydroorotate to orotate with quinone as electron acceptor. The sequence is that of Dihydroorotate dehydrogenase (quinone) from Neisseria meningitidis serogroup B (strain ATCC BAA-335 / MC58).